Here is a 497-residue protein sequence, read N- to C-terminus: Cytochrome P450 monooxygenase opdB (497 aa).

The helical transmembrane segment at 26–46 (YLGAMAGSVILLISAFTLSLG) threads the bilayer. Residues 69 to 90 (MSKFTRSRELSQQGEDAAGTEP) are disordered. Position 454 (Cys454) interacts with heme.

Heme serves as cofactor.

It localises to the membrane. Its pathway is secondary metabolite biosynthesis. Its function is as follows. Cytochrome P450 monooxygenase; part of the gene cluster that mediates the biosynthesis of oxopyrrolidines, polyketide-amino acid hybrid compounds with feature structures of tetramic acid. Does not seem to play a role in oxopyrrolidines A and B biosynthesis. May be involved in further modifications of these oxopyrrolidines. The protein is Cytochrome P450 monooxygenase opdB of Penicillium oxalicum (strain 114-2 / CGMCC 5302) (Penicillium decumbens).